The chain runs to 260 residues: MLGIRVIPCLDVTDGRVVKGTNFVNLKDAGDPVEVAKQYNSDGADELVFLDITATHERRDTTVDLVRRTAEKVFIPLTVGGGIRTTEDIRNLLNAGADKVSLNSSAVKDPSIIKKASDKFGIQCIVVAIDAKKTGEHKWNVFVHGGRIDTGIDAVLWAKKAAAFGAGEILLTSMDKDGTKDGYDSELLKAISSSVVIPVIASGGAGKVEHFSKACEYGASAVLAASLFHYKELTIKEVKEHLKSKNIPVRQIRAEFAINN.

Catalysis depends on residues aspartate 11 and aspartate 130.

Belongs to the HisA/HisF family. In terms of assembly, heterodimer of HisH and HisF.

The protein localises to the cytoplasm. The enzyme catalyses 5-[(5-phospho-1-deoxy-D-ribulos-1-ylimino)methylamino]-1-(5-phospho-beta-D-ribosyl)imidazole-4-carboxamide + L-glutamine = D-erythro-1-(imidazol-4-yl)glycerol 3-phosphate + 5-amino-1-(5-phospho-beta-D-ribosyl)imidazole-4-carboxamide + L-glutamate + H(+). It participates in amino-acid biosynthesis; L-histidine biosynthesis; L-histidine from 5-phospho-alpha-D-ribose 1-diphosphate: step 5/9. Its function is as follows. IGPS catalyzes the conversion of PRFAR and glutamine to IGP, AICAR and glutamate. The HisF subunit catalyzes the cyclization activity that produces IGP and AICAR from PRFAR using the ammonia provided by the HisH subunit. The polypeptide is Imidazole glycerol phosphate synthase subunit HisF (Endomicrobium trichonymphae).